The sequence spans 114 residues: T cell receptor alpha variable 12-3 (114 aa).

The N-terminal stretch at 1-21 (MMKSLRVLLVILWLQLSWVWS) is a signal peptide. Positions 24-114 (KEVEQDPGPL…DSATYLCAMS (91 aa)) constitute an Ig-like domain. The N-linked (GlcNAc...) asparagine glycan is linked to Asn-44. Residues Cys-45 and Cys-111 are joined by a disulfide bond.

As to quaternary structure, alpha-beta TR is a heterodimer composed of an alpha and beta chain; disulfide-linked. The alpha-beta TR is associated with the transmembrane signaling CD3 coreceptor proteins to form the TR-CD3 (TcR or TCR). The assembly of alpha-beta TR heterodimers with CD3 occurs in the endoplasmic reticulum where a single alpha-beta TR heterodimer associates with one CD3D-CD3E heterodimer, one CD3G-CD3E heterodimer and one CD247 homodimer forming a stable octameric structure. CD3D-CD3E and CD3G-CD3E heterodimers preferentially associate with TR alpha and TR beta chains, respectively. The association of the CD247 homodimer is the last step of TcR assembly in the endoplasmic reticulum and is required for transport to the cell surface.

Its subcellular location is the cell membrane. V region of the variable domain of T cell receptor (TR) alpha chain that participates in the antigen recognition. Alpha-beta T cell receptors are antigen specific receptors which are essential to the immune response and are present on the cell surface of T lymphocytes. Recognize peptide-major histocompatibility (MH) (pMH) complexes that are displayed by antigen presenting cells (APC), a prerequisite for efficient T cell adaptive immunity against pathogens. Binding of alpha-beta TR to pMH complex initiates TR-CD3 clustering on the cell surface and intracellular activation of LCK that phosphorylates the ITAM motifs of CD3G, CD3D, CD3E and CD247 enabling the recruitment of ZAP70. In turn ZAP70 phosphorylates LAT, which recruits numerous signaling molecules to form the LAT signalosome. The LAT signalosome propagates signal branching to three major signaling pathways, the calcium, the mitogen-activated protein kinase (MAPK) kinase and the nuclear factor NF-kappa-B (NF-kB) pathways, leading to the mobilization of transcription factors that are critical for gene expression and essential for T cell growth and differentiation. The T cell repertoire is generated in the thymus, by V-(D)-J rearrangement. This repertoire is then shaped by intrathymic selection events to generate a peripheral T cell pool of self-MH restricted, non-autoaggressive T cells. Post-thymic interaction of alpha-beta TR with the pMH complexes shapes TR structural and functional avidity. The protein is T cell receptor alpha variable 12-3 of Homo sapiens (Human).